A 93-amino-acid polypeptide reads, in one-letter code: Small ribosomal subunit protein uS19 (93 aa).

It belongs to the universal ribosomal protein uS19 family.

Its function is as follows. Protein S19 forms a complex with S13 that binds strongly to the 16S ribosomal RNA. In Arthrobacter sp. (strain FB24), this protein is Small ribosomal subunit protein uS19.